The following is a 619-amino-acid chain: DEAD-box ATP-dependent RNA helicase 14 (619 aa).

A2 is modified (N-acetylalanine). The WW domain maps to 17–51; the sequence is HTLPKPWKGLIDDRTGYLYFWNPETNVTQYEKPTP. Residues 47 to 139 are disordered; that stretch reads EKPTPSLPPK…APASELSPEA (93 aa). Low complexity predominate over residues 61–71; sequence VSVSSSVQVQQ. Positions 78–93 are enriched in basic and acidic residues; sequence PKDDDKYSRGSERVSR. The span at 125–139 shows a compositional bias: low complexity; sequence PLPSSAPASELSPEA. S136 is modified (phosphoserine). The short motif at 158–186 is the Q motif element; the sequence is MSFEATGFPPELLREVLSAGFSAPTPIQA. A Helicase ATP-binding domain is found at 189–363; sequence WPIAMQGRDI…ADLLVNPAQV (175 aa). 202–209 contacts ATP; sequence AKTGSGKT. Residues 311–314 carry the DEAD box motif; the sequence is DEAD. One can recognise a Helicase C-terminal domain in the interval 392–536; the sequence is RLEQILRSQE…RVPPQIREMA (145 aa). Positions 528 to 619 are disordered; that stretch reads VPPQIREMAT…FHETMMMKHR (92 aa). A compositionally biased stretch (gly residues) spans 552–568; it reads PSGGRGRGGDSGYGGRG. Basic and acidic residues-rich tracts occupy residues 582–595 and 609–619; these read GRER…ERFN and SFHETMMMKHR.

It belongs to the DEAD box helicase family. DDX5/DBP2 subfamily. As to expression, ubiquitous. Preferentially expressed in flowers and roots.

The protein localises to the nucleus. The enzyme catalyses ATP + H2O = ADP + phosphate + H(+). ATP-dependent RNA helicase involved nonsense-mediated mRNA decay and ribosome biogenesis through rRNA processing. The chain is DEAD-box ATP-dependent RNA helicase 14 (RH14) from Arabidopsis thaliana (Mouse-ear cress).